The primary structure comprises 333 residues: MQTNLLKPKAINVEPLSAAKGAHRAKVTLEPFERGYGHTLGNALRRVLLSSMVGYAPTEVTIAGVLHEYSAIDGVQEDVVHVMLNLKGVVFRLHNRDEVTLVLRKEGEGPVKAGDIQTPHDVEIINPDHVITHLSQGGKLDMQIKVEKGRGYVPGTMRRFGDEPTKSIGRIVLDASFSPVRRVSYTVESARVEQRTDLDKLVMEIETNGAITPEEAIRASAKILVEQLAVFAQLEGQINDIFDAQPAQRSTQFDPILLRPVDELELTVRSANCLKAENIYYIGDLIQRTETELLKTPNLGRKSLNEIKEVLASRGLTLGGRLENWPPQGLDKR.

The segment at 1–235 (MQTNLLKPKA…EQLAVFAQLE (235 aa)) is alpha N-terminal domain (alpha-NTD). The alpha C-terminal domain (alpha-CTD) stretch occupies residues 253 to 333 (FDPILLRPVD…NWPPQGLDKR (81 aa)).

The protein belongs to the RNA polymerase alpha chain family. In terms of assembly, homodimer. The RNAP catalytic core consists of 2 alpha, 1 beta, 1 beta' and 1 omega subunit. When a sigma factor is associated with the core the holoenzyme is formed, which can initiate transcription.

It catalyses the reaction RNA(n) + a ribonucleoside 5'-triphosphate = RNA(n+1) + diphosphate. Functionally, DNA-dependent RNA polymerase catalyzes the transcription of DNA into RNA using the four ribonucleoside triphosphates as substrates. The sequence is that of DNA-directed RNA polymerase subunit alpha from Methylibium petroleiphilum (strain ATCC BAA-1232 / LMG 22953 / PM1).